Consider the following 337-residue polypeptide: Viral cathepsin (337 aa).

A signal peptide spans 1 to 16 (MNKLLILFLLLNAALT). Residues 17-126 (RQDNHASANN…VVDGPAQRQR (110 aa)) constitute a propeptide, activation peptide. Intrachain disulfides connect C147/C188, C181/C221, and C276/C324. The active site involves C150. Residues H283 and N303 contribute to the active site.

The protein belongs to the peptidase C1 family. Synthesized as an inactive proenzyme and activated by proteolytic removal of the inhibitory propeptide.

The catalysed reaction is Endopeptidase of broad specificity, hydrolyzing substrates of both cathepsin L and cathepsin B.. Its function is as follows. Cysteine protease that plays an essential role in host liquefaction to facilitate horizontal transmission of the virus. May participate in the degradation of foreign protein expressed by the baculovirus system. This is Viral cathepsin (VCATH) from Lepidoptera (butterflies and moths).